A 199-amino-acid chain; its full sequence is Probable chemoreceptor glutamine deamidase CheD (199 aa).

It belongs to the CheD family.

It carries out the reaction L-glutaminyl-[protein] + H2O = L-glutamyl-[protein] + NH4(+). In terms of biological role, probably deamidates glutamine residues to glutamate on methyl-accepting chemotaxis receptors (MCPs), playing an important role in chemotaxis. This chain is Probable chemoreceptor glutamine deamidase CheD, found in Cereibacter sphaeroides (strain ATCC 17023 / DSM 158 / JCM 6121 / CCUG 31486 / LMG 2827 / NBRC 12203 / NCIMB 8253 / ATH 2.4.1.) (Rhodobacter sphaeroides).